The following is a 241-amino-acid chain: Probable transcriptional regulatory protein stu0195 (241 aa).

The protein belongs to the TACO1 family. YeeN subfamily.

It is found in the cytoplasm. The sequence is that of Probable transcriptional regulatory protein stu0195 from Streptococcus thermophilus (strain ATCC BAA-250 / LMG 18311).